A 353-amino-acid polypeptide reads, in one-letter code: MTVALGKSSKEEKNLFDIADDWLRRDRFVFVGWSGLLLFPCAYFALGGWFTGTTFVTSWYTHGLASSYLEGCNFLTAAVSTPANSLAHSLLLLWGPEAQGDFTRWCQLGGLWTFVAFHGGFGLIGFMLRQFELARSVQLRPYNAIAFSAPIAVFVSVFLIYPLGQSGWFFAPSFGVAAIFRFILFFQGFHNWTLNPFHMMGVAGVLGAALLCAIHGATVENTLFEDGDGANTFRAFNPTQAEETYSMVTANRFWSQIFGVAFSNKRWLHFFMLFVPVTGLWMSAIGVVGLALNLRAYDFVSQEIRAAEDPEFETFYTKNILLNEGIRAWMAAQDQPHENLIFPEEVLPRGNAL.

Thr-2 is subject to N-acetylthreonine. At Thr-2 the chain carries Phosphothreonine. A helical transmembrane segment spans residues 41–61 (CAYFALGGWFTGTTFVTSWYT). His-118 is a chlorophyll a binding site. A helical membrane pass occupies residues 125–141 (GFMLRQFELARSVQLRP). Pheophytin a-binding residues include Gln-130 and Asn-143. A helical transmembrane segment spans residues 153–166 (VFVSVFLIYPLGQS). Chlorophyll a is bound at residue His-198. The chain crosses the membrane as a helical span at residues 208–228 (AALLCAIHGATVENTLFEDGD). 2 residues coordinate a plastoquinone: His-215 and Phe-262. His-215 provides a ligand contact to Fe cation. Fe cation is bound at residue His-269. Residues 279–295 (GLWMSAIGVVGLALNLR) form a helical membrane-spanning segment.

It belongs to the reaction center PufL/M/PsbA/D family. In terms of assembly, PSII is composed of 1 copy each of membrane proteins PsbA, PsbB, PsbC, PsbD, PsbE, PsbF, PsbH, PsbI, PsbJ, PsbK, PsbL, PsbM, PsbT, PsbX, PsbY, PsbZ, Psb30/Ycf12, at least 3 peripheral proteins of the oxygen-evolving complex and a large number of cofactors. It forms dimeric complexes. The D1/D2 heterodimer binds P680, chlorophylls that are the primary electron donor of PSII, and subsequent electron acceptors. It shares a non-heme iron and each subunit binds pheophytin, quinone, additional chlorophylls, carotenoids and lipids. There is also a Cl(-1) ion associated with D1 and D2, which is required for oxygen evolution. The PSII complex binds additional chlorophylls, carotenoids and specific lipids. serves as cofactor.

The protein localises to the plastid. The protein resides in the chloroplast thylakoid membrane. It carries out the reaction 2 a plastoquinone + 4 hnu + 2 H2O = 2 a plastoquinol + O2. Functionally, photosystem II (PSII) is a light-driven water:plastoquinone oxidoreductase that uses light energy to abstract electrons from H(2)O, generating O(2) and a proton gradient subsequently used for ATP formation. It consists of a core antenna complex that captures photons, and an electron transfer chain that converts photonic excitation into a charge separation. The D1/D2 (PsbA/PsbD) reaction center heterodimer binds P680, the primary electron donor of PSII as well as several subsequent electron acceptors. D2 is needed for assembly of a stable PSII complex. This Cycas taitungensis (Prince sago) protein is Photosystem II D2 protein.